A 26-amino-acid polypeptide reads, in one-letter code: Omega-conotoxin CVIC (26 aa).

3 cysteine pairs are disulfide-bonded: Cys1-Cys16, Cys8-Cys20, and Cys15-Cys26. Cysteine amide is present on Cys26.

It belongs to the conotoxin O1 superfamily. As to expression, expressed by the venom duct.

Its subcellular location is the secreted. Its function is as follows. Omega-conotoxins act at presynaptic membranes, they bind and block voltage-gated calcium channels (Cav). This toxin blocks N-, P- and Q-type calcium channels. The polypeptide is Omega-conotoxin CVIC (Conus catus (Cat cone)).